Consider the following 715-residue polypeptide: Methylcrotonoyl-CoA carboxylase subunit alpha, mitochondrial (715 aa).

The transit peptide at 1–38 (MAAAALLAAVDRNQLRRVPILLLQPREWPWKHRTVKYG) directs the protein to the mitochondrion. The 446-residue stretch at 45–490 (ITKVLIANRG…HTDFIPQHHK (446 aa)) folds into the Biotin carboxylation domain. Residue Lys-159 participates in ATP binding. Residues 163-360 (KSIMAAAGVP…LVEWQLRIAA (198 aa)) enclose the ATP-grasp domain. At Lys-193 the chain carries N6-acetyllysine. Residues Lys-201 and 207–208 (GG) contribute to the ATP site. Position 233 is an N6-acetyllysine (Lys-233). ATP is bound by residues His-251, His-278, and Glu-318. Arg-335 is a catalytic residue. At Lys-490 the chain carries N6-acetyllysine. Lys-577 is modified (N6-acetyllysine; alternate). N6-succinyllysine; alternate is present on Lys-577. Residues 622–711 (SIEVGIPVPK…NRHAPLVEFE (90 aa)) form the Biotinyl-binding domain. The residue at position 677 (Lys-677) is an N6-biotinyllysine.

In terms of assembly, probably a dodecamer composed of six biotin-containing alpha subunits (MCCC1) and six beta (MCCC2) subunits. Interacts (via the biotin carboxylation domain) with SIRT4. The cofactor is biotin. Acetylated.

It localises to the mitochondrion matrix. It carries out the reaction 3-methylbut-2-enoyl-CoA + hydrogencarbonate + ATP = 3-methyl-(2E)-glutaconyl-CoA + ADP + phosphate + H(+). The protein operates within amino-acid degradation; L-leucine degradation; (S)-3-hydroxy-3-methylglutaryl-CoA from 3-isovaleryl-CoA: step 2/3. Biotin-attachment subunit of the 3-methylcrotonyl-CoA carboxylase, an enzyme that catalyzes the conversion of 3-methylcrotonyl-CoA to 3-methylglutaconyl-CoA, a critical step for leucine and isovaleric acid catabolism. The protein is Methylcrotonoyl-CoA carboxylase subunit alpha, mitochondrial of Rattus norvegicus (Rat).